The following is a 588-amino-acid chain: Aspartate--tRNA ligase (588 aa).

Position 171 (E171) interacts with L-aspartate. The aspartate stretch occupies residues 195-198 (QLFK). R217 lines the L-aspartate pocket. ATP-binding positions include 217–219 (RDE) and Q226. H447 contacts L-aspartate. Residue E481 coordinates ATP. R488 is a binding site for L-aspartate. Position 533-536 (533-536 (GLDR)) interacts with ATP.

Belongs to the class-II aminoacyl-tRNA synthetase family. Type 1 subfamily. In terms of assembly, homodimer.

It localises to the cytoplasm. The enzyme catalyses tRNA(Asp) + L-aspartate + ATP = L-aspartyl-tRNA(Asp) + AMP + diphosphate. In terms of biological role, catalyzes the attachment of L-aspartate to tRNA(Asp) in a two-step reaction: L-aspartate is first activated by ATP to form Asp-AMP and then transferred to the acceptor end of tRNA(Asp). The chain is Aspartate--tRNA ligase from Aeromonas salmonicida (strain A449).